Here is a 34-residue protein sequence, read N- to C-terminus: Photosystem II reaction center protein M (34 aa).

The chain crosses the membrane as a helical span at residues 7–27 (GFVASLLFILVPAIFLIVLYI).

Belongs to the PsbM family. As to quaternary structure, PSII is composed of 1 copy each of membrane proteins PsbA, PsbB, PsbC, PsbD, PsbE, PsbF, PsbH, PsbI, PsbJ, PsbK, PsbL, PsbM, PsbT, PsbX, PsbY, PsbZ, Psb30/Ycf12, peripheral proteins PsbO, CyanoQ (PsbQ), PsbU, PsbV and a large number of cofactors. It forms dimeric complexes.

The protein resides in the cellular thylakoid membrane. In terms of biological role, one of the components of the core complex of photosystem II (PSII). PSII is a light-driven water:plastoquinone oxidoreductase that uses light energy to abstract electrons from H(2)O, generating O(2) and a proton gradient subsequently used for ATP formation. It consists of a core antenna complex that captures photons, and an electron transfer chain that converts photonic excitation into a charge separation. This subunit is found at the monomer-monomer interface. The sequence is that of Photosystem II reaction center protein M from Parasynechococcus marenigrum (strain WH8102).